A 327-amino-acid chain; its full sequence is Serine/threonine-protein phosphatase PP1-1 (327 aa).

Mn(2+)-binding residues include Asp-63, His-65, Asp-91, and Asn-123. His-124 (proton donor) is an active-site residue. Mn(2+) is bound by residues His-172 and His-247. The disordered stretch occupies residues 305-327 (GYQGSSQNWHMTPPRKNKTGNSK). The residue at position 316 (Thr-316) is a Phosphothreonine; by CDC2. Residues 317-327 (PPRKNKTGNSK) are compositionally biased toward basic residues.

It belongs to the PPP phosphatase family. PP-1 subfamily. As to quaternary structure, oligomer. The cofactor is Mn(2+).

Its subcellular location is the nucleus. It carries out the reaction O-phospho-L-seryl-[protein] + H2O = L-seryl-[protein] + phosphate. The catalysed reaction is O-phospho-L-threonyl-[protein] + H2O = L-threonyl-[protein] + phosphate. Essential role in cell cycle control. PP1 is perhaps required for exit from mitosis. The sequence is that of Serine/threonine-protein phosphatase PP1-1 (dis2) from Schizosaccharomyces pombe (strain 972 / ATCC 24843) (Fission yeast).